The sequence spans 352 residues: Putative formin-like protein 15b (352 aa).

Residues 1–350 (MTLFNFIKLF…KDAKEAEMEK (350 aa)) enclose the FH2 domain.

This sequence belongs to the formin-like family. Class-II subfamily.

In Arabidopsis thaliana (Mouse-ear cress), this protein is Putative formin-like protein 15b (FH15B).